A 240-amino-acid chain; its full sequence is ATP-dependent dethiobiotin synthetase BioD (240 aa).

15–20 contacts ATP; the sequence is EIGKTF. Threonine 19 provides a ligand contact to Mg(2+). Lysine 40 is a catalytic residue. Residues aspartate 57, 118–121, and 178–179 contribute to the ATP site; these read EGVG and NR. The Mg(2+) site is built by aspartate 57 and glutamate 118.

This sequence belongs to the dethiobiotin synthetase family. Homodimer. Mg(2+) serves as cofactor.

It localises to the cytoplasm. The enzyme catalyses (7R,8S)-7,8-diammoniononanoate + CO2 + ATP = (4R,5S)-dethiobiotin + ADP + phosphate + 3 H(+). It participates in cofactor biosynthesis; biotin biosynthesis; biotin from 7,8-diaminononanoate: step 1/2. In terms of biological role, catalyzes a mechanistically unusual reaction, the ATP-dependent insertion of CO2 between the N7 and N8 nitrogen atoms of 7,8-diaminopelargonic acid (DAPA, also called 7,8-diammoniononanoate) to form a ureido ring. This Burkholderia pseudomallei (strain 1106a) protein is ATP-dependent dethiobiotin synthetase BioD.